We begin with the raw amino-acid sequence, 364 residues long: Cell division protein FtsZ 1 (364 aa).

GTP is bound by residues 47–48 (GA), 97–99 (AGG), 134–136 (GTG), glutamate 165, arginine 169, and aspartate 212.

This sequence belongs to the FtsZ family. Homodimer. Polymerizes to form a dynamic ring structure in a strictly GTP-dependent manner. Interacts directly with several other division proteins.

The protein resides in the cytoplasm. In terms of biological role, essential cell division protein that forms a contractile ring structure (Z ring) at the future cell division site. The regulation of the ring assembly controls the timing and the location of cell division. One of the functions of the FtsZ ring is to recruit other cell division proteins to the septum to produce a new cell wall between the dividing cells. Binds GTP and shows GTPase activity. This Methanocaldococcus jannaschii (strain ATCC 43067 / DSM 2661 / JAL-1 / JCM 10045 / NBRC 100440) (Methanococcus jannaschii) protein is Cell division protein FtsZ 1.